A 209-amino-acid chain; its full sequence is MTLAKEIARDLLKIKAVYLKPEEPFTWASGIQSPIYTDNRVTLAYPETRTLIEDGFVEKIRAEFPDVEVIAGTATAGIPHGAIIADKMNLPFAYIRSKPKDHGAGNQIEGRVAPGQKMVVIEDLISTGGSVLDAIAAAKREGADVIGAAAIFTYELPKADKNFNDAGVKLVTLSNYTELIHLAEQEGYINAEGLALLKRFKEDQENWHL.

5-phospho-alpha-D-ribose 1-diphosphate contacts are provided by residues arginine 96, lysine 100, histidine 102, and 122 to 130 (EDLISTGGS). Serine 126 is an orotate binding site.

It belongs to the purine/pyrimidine phosphoribosyltransferase family. PyrE subfamily. Homodimer. It depends on Mg(2+) as a cofactor.

It catalyses the reaction orotidine 5'-phosphate + diphosphate = orotate + 5-phospho-alpha-D-ribose 1-diphosphate. Its pathway is pyrimidine metabolism; UMP biosynthesis via de novo pathway; UMP from orotate: step 1/2. Catalyzes the transfer of a ribosyl phosphate group from 5-phosphoribose 1-diphosphate to orotate, leading to the formation of orotidine monophosphate (OMP). This Streptococcus gordonii (strain Challis / ATCC 35105 / BCRC 15272 / CH1 / DL1 / V288) protein is Orotate phosphoribosyltransferase.